We begin with the raw amino-acid sequence, 94 residues long: Bacterial microcompartment shell protein PduA (94 aa).

In terms of domain architecture, BMC spans alanine 5–proline 89.

The protein belongs to the bacterial microcompartments protein family. In terms of assembly, homohexamer with a central pore of about 5.6 Angstroms in diameter. The hexamers pack against each other in arrays. Interacts with the N-terminus of PduP which targets PduP to the BMC. Modeling suggests PduC, PduD, PduE, PduL and PduP interact with a cleft formed by the C-terminal segments of 2 adjacent PduA subunits (on the BMC luminal side) in the hexamer.

It is found in the bacterial microcompartment. It functions in the pathway polyol metabolism; 1,2-propanediol degradation. One of the major shell proteins of the bacterial microcompartment (BMC) dedicated to 1,2-propanediol (1,2-PD) degradation. At least one of PduA or PduJ is required for BMC assembly; it must be encoded as the first gene in the pdu operon. Not required for structural integrity of BMCs, it is required to mitigate propionaldehyde toxicity. Controls diffusion of 1,2-PD into and propionaldehyde out of the BMC shell; residue 40 is particularly important for pore permeability. Overexpression of this protein leads to aberrant filaments that extend the length of the cell, cross the cleavage furrow and impair division. The filaments form nanotubes with a hollow center. The isolated BMC shell component protein ratio for J:A:B':B:K:T:U is approximately 15:10:7:6:1:1:2. Edge residues (particularly Lys-26) are important for function and assembly of the BMC, and influence array formation by hexamers. Interaction with PduA allows encapsulation of at least PduP in BMCs. Probably also targets PduD to the BMC. PduA is probably the hub for binding multiple enzymes to the interior of the BMC; modeling suggests PduC, PduD, PduE, PduG, PduL and PduP are targeted to PduA. Functionally, the 1,2-PD-specific bacterial microcompartment (BMC) concentrates low levels of 1,2-PD catabolic enzymes, concentrates volatile reaction intermediates thus enhancing pathway flux and keeps the level of toxic, mutagenic propionaldehyde low. The sequence is that of Bacterial microcompartment shell protein PduA from Salmonella typhimurium (strain LT2 / SGSC1412 / ATCC 700720).